The following is a 36-amino-acid chain: Photosystem II reaction center protein Y (36 aa).

Over Met1–Arg4 the chain is Lumenal. Residues Leu5–Ile23 form a helical membrane-spanning segment. At Gly24 to Arg36 the chain is on the stromal side.

This sequence belongs to the PsbY family. As to quaternary structure, PSII is composed of 1 copy each of membrane proteins PsbA, PsbB, PsbC, PsbD, PsbE, PsbF, PsbH, PsbI, PsbJ, PsbK, PsbL, PsbM, PsbT, PsbX, PsbY, PsbZ, Psb30/Ycf12, at least 3 peripheral proteins of the oxygen-evolving complex and a large number of cofactors. It forms dimeric complexes.

The protein localises to the plastid. It is found in the chloroplast thylakoid membrane. Its function is as follows. Loosely associated component of the core of photosystem II (PSII), it is not always seen in crystals. PSII is a light-driven water plastoquinone oxidoreductase, using light energy to abstract electrons from H(2)O, generating a proton gradient subsequently used for ATP formation. The chain is Photosystem II reaction center protein Y from Thalassiosira pseudonana (Marine diatom).